Reading from the N-terminus, the 397-residue chain is Phosphoglycerate kinase (397 aa).

Residues 21–23 (DFN), Arg37, 60–63 (HLGR), Arg119, and Arg152 each bind substrate. ATP is bound by residues Lys203, Gly294, Glu325, and 354–357 (GGDS).

The protein belongs to the phosphoglycerate kinase family. In terms of assembly, monomer.

It localises to the cytoplasm. The enzyme catalyses (2R)-3-phosphoglycerate + ATP = (2R)-3-phospho-glyceroyl phosphate + ADP. It participates in carbohydrate degradation; glycolysis; pyruvate from D-glyceraldehyde 3-phosphate: step 2/5. This Chlorobium chlorochromatii (strain CaD3) protein is Phosphoglycerate kinase.